Consider the following 221-residue polypeptide: Triosephosphate isomerase (221 aa).

A substrate-binding site is contributed by 8-10; it reads NLK. H92 functions as the Electrophile in the catalytic mechanism. The active-site Proton acceptor is the E140. Residues I145, G180, and 201–202 each bind substrate; that span reads AS.

This sequence belongs to the triosephosphate isomerase family. In terms of assembly, homotetramer; dimer of dimers.

Its subcellular location is the cytoplasm. The enzyme catalyses D-glyceraldehyde 3-phosphate = dihydroxyacetone phosphate. Its pathway is carbohydrate biosynthesis; gluconeogenesis. It functions in the pathway carbohydrate degradation; glycolysis; D-glyceraldehyde 3-phosphate from glycerone phosphate: step 1/1. In terms of biological role, involved in the gluconeogenesis. Catalyzes stereospecifically the conversion of dihydroxyacetone phosphate (DHAP) to D-glyceraldehyde-3-phosphate (G3P). This chain is Triosephosphate isomerase, found in Methanococcoides burtonii (strain DSM 6242 / NBRC 107633 / OCM 468 / ACE-M).